Consider the following 259-residue polypeptide: Ribonuclease HII (259 aa).

The region spanning 70–258 (TLIVGIDEVG…VKSLVLGKKE (189 aa)) is the RNase H type-2 domain. Asp-76, Glu-77, and Asp-168 together coordinate a divalent metal cation.

This sequence belongs to the RNase HII family. Mn(2+) is required as a cofactor. It depends on Mg(2+) as a cofactor.

It localises to the cytoplasm. It catalyses the reaction Endonucleolytic cleavage to 5'-phosphomonoester.. In terms of biological role, endonuclease that specifically degrades the RNA of RNA-DNA hybrids. The chain is Ribonuclease HII from Streptococcus pneumoniae serotype 2 (strain D39 / NCTC 7466).